The following is a 311-amino-acid chain: Dermonecrotic toxin LlSicTox-alphaIII1i (311 aa).

The first 21 residues, 1 to 21 (MYAHLALILGCWTVVLQGAET), serve as a signal peptide directing secretion. Positions 22 to 26 (DVGER) are excised as a propeptide. Residue H38 is part of the active site. Mg(2+) contacts are provided by E58 and D60. The active-site Nucleophile is H73. A disulfide bridge connects residues C77 and C83. Position 117 (D117) interacts with Mg(2+).

Belongs to the arthropod phospholipase D family. Class I subfamily. The cofactor is Mg(2+). In terms of tissue distribution, expressed by the venom gland.

It localises to the secreted. The enzyme catalyses an N-(acyl)-sphingosylphosphocholine = an N-(acyl)-sphingosyl-1,3-cyclic phosphate + choline. The catalysed reaction is an N-(acyl)-sphingosylphosphoethanolamine = an N-(acyl)-sphingosyl-1,3-cyclic phosphate + ethanolamine. It carries out the reaction a 1-acyl-sn-glycero-3-phosphocholine = a 1-acyl-sn-glycero-2,3-cyclic phosphate + choline. It catalyses the reaction a 1-acyl-sn-glycero-3-phosphoethanolamine = a 1-acyl-sn-glycero-2,3-cyclic phosphate + ethanolamine. Its function is as follows. Dermonecrotic toxins cleave the phosphodiester linkage between the phosphate and headgroup of certain phospholipids (sphingolipid and lysolipid substrates), forming an alcohol (often choline) and a cyclic phosphate. This toxin acts on sphingomyelin (SM) with high activity. It also act on acyl- and alkyl-lysophosphatidylcholine (LPC), but not on sphingosylphosphorylcholine (SPC) and phosphatidylcholine (PC). It may also act on ceramide phosphoethanolamine (CPE), and lysophosphatidylethanolamine (LPE), but not on lysophosphatidylserine (LPS), and lysophosphatidylglycerol (LPG). It acts by transphosphatidylation, releasing exclusively cyclic phosphate products as second products. Induces complement-dependent hemolysis and dermonecrosis. Also induces increased vascular permeability, edema, inflammatory response, and platelet aggregation. This is Dermonecrotic toxin LlSicTox-alphaIII1i from Loxosceles laeta (South American recluse spider).